A 747-amino-acid polypeptide reads, in one-letter code: DNA ligase 1 (747 aa).

Positions 1-84 are disordered; sequence MQKSITSFFK…KEVDDKTTDK (84 aa). 7 positions are modified to phosphoserine: Ser-18, Ser-20, Ser-42, Ser-44, Ser-46, Ser-60, and Ser-65. Basic and acidic residues predominate over residues 26 to 42; that stretch reads PKIDAKTELPDEPHIKS. Positions 60 to 84 are enriched in basic and acidic residues; it reads SEEKTSPVKNVKKEPKEVDDKTTDK. Residue Lys-395 is the N6-AMP-lysine intermediate of the active site. A compositionally biased stretch (polar residues) spans 725-740; the sequence is QSQDQVKNNQKSSTQM. The segment at 725–747 is disordered; sequence QSQDQVKNNQKSSTQMEMEDEFY.

The protein belongs to the ATP-dependent DNA ligase family.

It is found in the nucleus. The enzyme catalyses ATP + (deoxyribonucleotide)n-3'-hydroxyl + 5'-phospho-(deoxyribonucleotide)m = (deoxyribonucleotide)n+m + AMP + diphosphate.. DNA ligase that seals nicks in double-stranded DNA during DNA replication, DNA recombination and DNA repair. The chain is DNA ligase 1 from Drosophila melanogaster (Fruit fly).